Consider the following 212-residue polypeptide: Ribosomal RNA small subunit methyltransferase G (212 aa).

S-adenosyl-L-methionine contacts are provided by residues G76, M81, 127–128 (VE), and R145.

It belongs to the methyltransferase superfamily. RNA methyltransferase RsmG family.

Its subcellular location is the cytoplasm. The enzyme catalyses guanosine(527) in 16S rRNA + S-adenosyl-L-methionine = N(7)-methylguanosine(527) in 16S rRNA + S-adenosyl-L-homocysteine. Specifically methylates the N7 position of guanine in position 527 of 16S rRNA. The polypeptide is Ribosomal RNA small subunit methyltransferase G (Acinetobacter baylyi (strain ATCC 33305 / BD413 / ADP1)).